Consider the following 634-residue polypeptide: Chaperone protein HtpG (634 aa).

Residues 1 to 342 are a; substrate-binding; that stretch reads MTVASHKETL…SNDLPLNISR (342 aa). The segment at 343–559 is b; sequence EILQNNRVID…QHDMSGYLER (217 aa). Residues 560-634 form a c region; it reads LLKEAGQQAP…LNSLLLAMAD (75 aa).

This sequence belongs to the heat shock protein 90 family. As to quaternary structure, homodimer.

The protein localises to the cytoplasm. In terms of biological role, molecular chaperone. Has ATPase activity. The protein is Chaperone protein HtpG of Nitrosococcus oceani (strain ATCC 19707 / BCRC 17464 / JCM 30415 / NCIMB 11848 / C-107).